The following is a 233-amino-acid chain: 7-cyano-7-deazaguanine synthase (233 aa).

Position 7–17 (7–17) interacts with ATP; that stretch reads LSGGLDSAVTS. Residues C195, C206, C209, and C212 each contribute to the Zn(2+) site.

The protein belongs to the QueC family. Zn(2+) serves as cofactor.

The enzyme catalyses 7-carboxy-7-deazaguanine + NH4(+) + ATP = 7-cyano-7-deazaguanine + ADP + phosphate + H2O + H(+). It functions in the pathway purine metabolism; 7-cyano-7-deazaguanine biosynthesis. Functionally, catalyzes the ATP-dependent conversion of 7-carboxy-7-deazaguanine (CDG) to 7-cyano-7-deazaguanine (preQ(0)). This chain is 7-cyano-7-deazaguanine synthase, found in Methanococcus maripaludis (strain C6 / ATCC BAA-1332).